The sequence spans 452 residues: UDP-glycosyltransferase 79B11 (452 aa).

Residues serine 260, 319–325, 340–348, and 362–365 contribute to the UDP-alpha-D-glucose site; these read VQQPSWQ, HCGFGSMWE, and LNDQ.

The protein belongs to the UDP-glycosyltransferase family.

The chain is UDP-glycosyltransferase 79B11 (UGT79B11) from Arabidopsis thaliana (Mouse-ear cress).